The chain runs to 313 residues: Acetyl-coenzyme A carboxylase carboxyl transferase subunit alpha (313 aa).

Residues 42-292 (KSDKLLRDTY…GAAIGEELDK (251 aa)) enclose the CoA carboxyltransferase C-terminal domain.

It belongs to the AccA family. As to quaternary structure, acetyl-CoA carboxylase is a heterohexamer composed of biotin carboxyl carrier protein (AccB), biotin carboxylase (AccC) and two subunits each of ACCase subunit alpha (AccA) and ACCase subunit beta (AccD).

It is found in the cytoplasm. It catalyses the reaction N(6)-carboxybiotinyl-L-lysyl-[protein] + acetyl-CoA = N(6)-biotinyl-L-lysyl-[protein] + malonyl-CoA. The protein operates within lipid metabolism; malonyl-CoA biosynthesis; malonyl-CoA from acetyl-CoA: step 1/1. In terms of biological role, component of the acetyl coenzyme A carboxylase (ACC) complex. First, biotin carboxylase catalyzes the carboxylation of biotin on its carrier protein (BCCP) and then the CO(2) group is transferred by the carboxyltransferase to acetyl-CoA to form malonyl-CoA. The chain is Acetyl-coenzyme A carboxylase carboxyl transferase subunit alpha from Rhizorhabdus wittichii (strain DSM 6014 / CCUG 31198 / JCM 15750 / NBRC 105917 / EY 4224 / RW1) (Sphingomonas wittichii).